Reading from the N-terminus, the 207-residue chain is Probable isochorismatase (207 aa).

It belongs to the isochorismatase family.

The catalysed reaction is isochorismate + H2O = (2S,3S)-2,3-dihydroxy-2,3-dihydrobenzoate + pyruvate. Its pathway is antibiotic biosynthesis; phenazine biosynthesis. Functionally, involved in the biosynthesis of the antibiotic phenazine, a nitrogen-containing heterocyclic molecule having important roles in virulence, competition and biological control. This isochorismatase may remove pyruvate from chorismate during the formation of the phenazine ring structure and/or stabilize the phenazine biosynthetic complex. The chain is Probable isochorismatase (phzA) from Pseudomonas chlororaphis (Pseudomonas aureofaciens).